The sequence spans 126 residues: MKDWLDSVNWNADGLVPAIAQDATSGRILMMAWMNRESLRLTAEKQQAIYWSRSRNQLWHKGETSGHVQHVREIRLDCDEDVIVLQVVQEGGIACHTGRESCFYRVFRNGEWVAVDPVLKDPAEIY.

Position 77 (D77) interacts with Mg(2+). C78 contacts Zn(2+). 2 residues coordinate Mg(2+): D79 and D81. Zn(2+)-binding residues include C95 and C102.

It belongs to the PRA-CH family. Homodimer. Mg(2+) serves as cofactor. Requires Zn(2+) as cofactor.

The protein localises to the cytoplasm. It catalyses the reaction 1-(5-phospho-beta-D-ribosyl)-5'-AMP + H2O = 1-(5-phospho-beta-D-ribosyl)-5-[(5-phospho-beta-D-ribosylamino)methylideneamino]imidazole-4-carboxamide. It functions in the pathway amino-acid biosynthesis; L-histidine biosynthesis; L-histidine from 5-phospho-alpha-D-ribose 1-diphosphate: step 3/9. In terms of biological role, catalyzes the hydrolysis of the adenine ring of phosphoribosyl-AMP. The polypeptide is Phosphoribosyl-AMP cyclohydrolase (Cellvibrio japonicus (strain Ueda107) (Pseudomonas fluorescens subsp. cellulosa)).